The primary structure comprises 456 residues: Mitochondrial import inner membrane translocase subunit TIM50 (456 aa).

The transit peptide at 1–22 (MSLSKLSQKCFSRHHARTFIRF) directs the protein to the mitochondrion. The Mitochondrial matrix segment spans residues 23-171 (SSSDFQSLLG…RRKRMERNTR (149 aa)). Disordered stretches follow at residues 101-120 (ETEK…AIDE) and 132-165 (EEAA…RRKR). Polar residues predominate over residues 137-153 (SKTSAPSGSSGDNNDQP). A helical membrane pass occupies residues 172–192 (IGGYVLLGGSVIGFISFCFYY). Residues 193 to 456 (GRAQRDEAGN…LFGFRRHASA (264 aa)) lie on the Mitochondrial intermembrane side of the membrane. An FCP1 homology domain is found at 247–391 (YLQPKYTIVI…VDLAELLKTI (145 aa)).

This sequence belongs to the TIM50 family. As to quaternary structure, component of the TIM23 complex at least composed of tim-23, tim-17 and tim-50.

The protein resides in the mitochondrion inner membrane. Essential component of the TIM23 complex, a complex that mediates the translocation of transit peptide-containing proteins across the mitochondrial inner membrane. This chain is Mitochondrial import inner membrane translocase subunit TIM50 (scpl-4), found in Caenorhabditis briggsae.